The following is a 104-amino-acid chain: Large ribosomal subunit protein uL24 (104 aa).

This sequence belongs to the universal ribosomal protein uL24 family. As to quaternary structure, part of the 50S ribosomal subunit.

In terms of biological role, one of two assembly initiator proteins, it binds directly to the 5'-end of the 23S rRNA, where it nucleates assembly of the 50S subunit. Functionally, one of the proteins that surrounds the polypeptide exit tunnel on the outside of the subunit. The chain is Large ribosomal subunit protein uL24 from Rhodopseudomonas palustris (strain BisA53).